The sequence spans 178 residues: Protein-export protein SecB (178 aa).

Over residues 1-13 (MADEGDVLTDLDM) the composition is skewed to acidic residues. Residues 1 to 25 (MADEGDVLTDLDMDPAAGGNGADNR) are disordered.

This sequence belongs to the SecB family. As to quaternary structure, homotetramer, a dimer of dimers. One homotetramer interacts with 1 SecA dimer.

The protein resides in the cytoplasm. One of the proteins required for the normal export of preproteins out of the cell cytoplasm. It is a molecular chaperone that binds to a subset of precursor proteins, maintaining them in a translocation-competent state. It also specifically binds to its receptor SecA. In Erythrobacter litoralis (strain HTCC2594), this protein is Protein-export protein SecB.